A 408-amino-acid polypeptide reads, in one-letter code: Eukaryotic initiation factor 4A-II (408 aa).

A disordered region spans residues 1-22 (MSGGSADYNSREHGGPEGMDPD). Positions 34 to 62 (DNFDDMNLKESLLRGIYAYGFEKPSAIQQ) match the Q motif motif. A Helicase ATP-binding domain is found at 65 to 236 (IIPCIKGYDV…KKFMRDPIRI (172 aa)). 77-84 (QAQSGTGK) serves as a coordination point for ATP. Thr160 carries the post-translational modification Phosphothreonine. The short motif at 183-186 (LDEA) is the DEAD box element. A Helicase C-terminal domain is found at 247–408 (GIKQFYINVE…EMPMNVADLI (162 aa)).

The protein belongs to the DEAD box helicase family. eIF4A subfamily. As to quaternary structure, eIF4F is a multi-subunit complex, the composition of which varies with external and internal environmental conditions. It is composed of at least EIF4A, EIF4E and EIF4G1/EIFFG3. Interacts with EIF4E. May interact with NOM1.

It catalyses the reaction ATP + H2O = ADP + phosphate + H(+). In terms of biological role, ATP-dependent RNA helicase which is a subunit of the eIF4F complex involved in cap recognition and is required for mRNA binding to ribosome. In the current model of translation initiation, eIF4A unwinds RNA secondary structures in the 5'-UTR of mRNAs which is necessary to allow efficient binding of the small ribosomal subunit, and subsequent scanning for the initiator codon. The polypeptide is Eukaryotic initiation factor 4A-II (EIF4A2) (Macaca fascicularis (Crab-eating macaque)).